Reading from the N-terminus, the 504-residue chain is Ent-kaurene oxidase-like 3 (504 aa).

The chain crosses the membrane as a helical span at residues 3–23; it reads SLLAAGAGGIGVAAAAVGGFI. Position 448 (Cys-448) interacts with heme.

This sequence belongs to the cytochrome P450 family. Heme is required as a cofactor. Expressed in leaf blades.

The protein resides in the membrane. Its function is as follows. May hydroxylate diterpenes. This chain is Ent-kaurene oxidase-like 3, found in Oryza sativa subsp. japonica (Rice).